A 427-amino-acid polypeptide reads, in one-letter code: MRRAGAACSAMDRLRLLLLLLLLLGVSFGGAKETCSTGMYTHSGECCKACNLGEGVAQPCGANQTVCEPCLDSVTFSDVVSATEPCKPCTECLGLQSMSAPCVEADDAVCRCSYGYYQDEETGRCEACSVCGVGSGLVFSCQDKQNTVCEECPEGTYSDEANHVDPCLPCTVCEDTERQLRECTPWADAECEEIPGRWITRSTPPEGSDVTTPSTQEPEAPPERDLIASTVADTVTTVMGSSQPVVTRGTADNLIPVYCSILAAVVVGLVAYIAFKRWNSCKQNKQGANSRPVNQTPPPEGEKLHSDSGISVDSQSLHDQQTHTQTASGQALKGDGNLYSSLPLTKREEVEKLLNGDTWRHLAGELGYQPEHIDSFTHEACPVRALLASWGAQDSATLDALLAALRRIQRADIVESLCSESTATSPV.

Residues 1–31 (MRRAGAACSAMDRLRLLLLLLLLLGVSFGGA) form the signal peptide. Residues 32–254 (KETCSTGMYT…VVTRGTADNL (223 aa)) are Extracellular-facing. TNFR-Cys repeat units follow at residues 34–67 (TCST…QTVC), 69–110 (PCLD…DAVC), 111–149 (RCSY…NTVC), and 151–191 (ECPE…DAEC). Disulfide bonds link Cys35-Cys46, Cys47-Cys60, Cys50-Cys67, Cys70-Cys86, Cys89-Cys102, Cys92-Cys110, Cys112-Cys125, Cys128-Cys141, Cys131-Cys149, Cys152-Cys167, Cys170-Cys183, and Cys173-Cys191. N-linked (GlcNAc...) asparagine glycosylation occurs at Asn63. The tract at residues 197 to 223 (RWITRSTPPEGSDVTTPSTQEPEAPPE) is disordered. Residues 200–217 (TRSTPPEGSDVTTPSTQE) show a composition bias toward polar residues. The helical transmembrane segment at 255 to 275 (IPVYCSILAAVVVGLVAYIAF) threads the bilayer. Residues 276–427 (KRWNSCKQNK…CSESTATSPV (152 aa)) are Cytoplasmic-facing. Composition is skewed to polar residues over residues 284–294 (NKQGANSRPVN) and 308–329 (SGIS…TASG). Residues 284 to 334 (NKQGANSRPVNQTPPPEGEKLHSDSGISVDSQSLHDQQTHTQTASGQALKG) are disordered. Residue Ser314 is modified to Phosphoserine. The tract at residues 329–344 (GQALKGDGNLYSSLPL) is mediates interaction with KIDINS220. The Death domain occupies 356–421 (GDTWRHLAGE…DIVESLCSES (66 aa)).

As to quaternary structure, homodimer; disulfide-linked. Heterodimer with SORCS2. The extracellular domains of the heterodimer bind NGF. The cytoplasmic region of the heterodimer binds TRIO. NGF binding mediates dissociation of TRIO from the receptor complex. Interacts with TRAF2, TRAF4, TRAF6, PTPN13 and RANBP9. Interacts through TRAF6 with SQSTM1 which bridges NGFR to NTRK1. Interacts with BEX1. Interacts with BEX3. Interacts with KIDINS220 and NTRK1. Can form a ternary complex with NTRK1 and KIDINS220 and this complex is affected by the expression levels of KIDINS220. An increase in KIDINS220 expression leads to a decreased association of NGFR and NTRK1. Interacts (via death domain) with RAB31. Interacts with NTRK2; may regulate the ligand specificity of the NTRK2 receptor. Interacts with LINGO1. Interacts with NRADD. Interacts with MAGED1; the interaction antagonizes the association NGFR:NTRK1. Interacts with RTN4R. Interacts (via death domain) with ARHGDIA and RIPK2. Interacts with BFAR. (Microbial infection) Binds to rabies virus glycoprotein Gs. N-glycosylated. O-glycosylated. Post-translationally, phosphorylated on serine residues. As to expression, detected in Schwann cells. Detected in embryonic brain, in hippocampus neurons (at protein level). Detected in brain and spinal cord.

The protein resides in the cell membrane. It localises to the cytoplasm. Its subcellular location is the perikaryon. The protein localises to the cell projection. It is found in the growth cone. The protein resides in the dendritic spine. In terms of biological role, low affinity neurotrophin receptor which can bind to mature NGF, BDNF, NTF3, and NTF4. Forms a heterodimeric receptor with SORCS2 that binds the precursor forms of NGF (proNGF), BDNF (proBDNF) and NTF3 (proNT3) with high affinity, and has much lower affinity for mature NGF and BDNF. Plays an important role in differentiation and survival of specific neuronal populations during development. Can mediate cell survival as well as cell death of neural cells. The heterodimeric receptor formed with SORCS2 plays a role in proBDNF-dependent synaptic plasticity, in hippocampal long term depression (LTD) and long term potentiation (LTP). Plays a role in the inactivation of RHOA. Plays a role in the regulation of the translocation of GLUT4 to the cell surface in adipocytes and skeletal muscle cells in response to insulin, probably by regulating RAB31 activity, and thereby contributes to the regulation of insulin-dependent glucose uptake. Necessary for the circadian oscillation of the clock genes BMAL1, PER1, PER2 and NR1D1 in the suprachiasmatic nucleus (SCN) of the brain and in liver and of the genes involved in glucose and lipid metabolism in the liver. (Microbial infection) Cell surface receptor for rabies virus glycoprotein Gs. Its function is as follows. Does not bind NGF, BDNF, NTF3, and NTF4. This chain is Tumor necrosis factor receptor superfamily member 16 (Ngfr), found in Mus musculus (Mouse).